The sequence spans 538 residues: Syncytin-1 (538 aa).

The first 20 residues, 1-20 (MALPYHIFLFTVLLPSFTLT), serve as a signal peptide directing secretion. Residues 31 to 443 (SSPYQEFLWR…NIGPWGLLSQ (413 aa)) lie on the Extracellular side of the membrane. N-linked (GlcNAc...) asparagine glycosylation occurs at asparagine 169. Residues 186–189 (CWMC) carry the CXXC motif. Disulfide bonds link cysteine 186–cysteine 189, cysteine 186–cysteine 405, and cysteine 397–cysteine 404. Residues asparagine 208, asparagine 214, asparagine 234, asparagine 242, and asparagine 281 are each glycosylated (N-linked (GlcNAc...) asparagine). Residues 320-340 (ILPFVMGAGVLGALGTGIGSI) form a fusion peptide region. The interval 380–396 (LQNRRALDLLTAERGGT) is immunosuppression. Residues 397–405 (CLFLGEECC) carry the CX6CC motif. Asparagine 409 is a glycosylation site (N-linked (GlcNAc...) asparagine). The chain crosses the membrane as a helical span at residues 444 to 464 (WMPWILPFLGPLAAIILLLLF). Residues 465–484 (GPCIFNLLVNFVSSRIEAIK) are essential for the fusiogenic function. At 465 to 538 (GPCIFNLLVN…LLRPNSAGSS (74 aa)) the chain is on the cytoplasmic side. A disordered region spans residues 494–538 (KTKNYRRSLDWPASPRSDVNDIKGIPPEEISTAQPLLRPNSAGSS).

It belongs to the gamma type-C retroviral envelope protein family. HERV class-I W env subfamily. As to quaternary structure, the mature envelope protein (Env) consists of a trimer of SU-TM heterodimers attached probably by a labile interchain disulfide bond. Interacts with the C-type lectin CD209/DC-SIGN. Post-translationally, specific enzymatic cleavages in vivo yield mature proteins. Envelope glycoproteins are synthesized as an inactive precursor that is heavily N-glycosylated and processed likely by furin in the Golgi to yield the mature SU and TM proteins. The cleavage site between SU and TM requires the minimal sequence [KR]-X-[KR]-R. In terms of processing, the CXXC motif is highly conserved across a broad range of retroviral envelope proteins. It is thought to participate in the formation of a labile disulfide bond possibly with the CX6CC motif present in the transmembrane protein.

Its subcellular location is the cell membrane. It localises to the virion. In terms of biological role, this endogenous retroviral envelope protein has retained its original fusogenic properties and participates in trophoblast fusion and the formation of a syncytium during placenta morphogenesis. May recognize and induce fusion through binding of SLC1A4 and SLC1A5. Functionally, endogenous envelope proteins may have kept, lost or modified their original function during evolution. Retroviral envelope proteins mediate receptor recognition and membrane fusion during early infection. The surface protein (SU) mediates receptor recognition, while the transmembrane protein (TM) acts as a class I viral fusion protein. The protein may have at least 3 conformational states: pre-fusion native state, pre-hairpin intermediate state, and post-fusion hairpin state. During viral and target cell membrane fusion, the coiled coil regions (heptad repeats) assume a trimer-of-hairpins structure, positioning the fusion peptide in close proximity to the C-terminal region of the ectodomain. The formation of this structure appears to drive apposition and subsequent fusion of membranes. This chain is Syncytin-1 (ERVW-1), found in Hylobates pileatus (Pileated gibbon).